The primary structure comprises 283 residues: Homeobox-leucine zipper protein HAT2 (283 aa).

A disordered region spans residues 64-134 (VNCEEDTGVS…GETSRKKLRL (71 aa)). Residues 73–84 (SSPNSTISSTIS) show a composition bias toward low complexity. A DNA-binding region (homeobox) is located at residues 127–186 (TSRKKLRLSKDQSAFLEETFKEHNTLNPKQKLALAKKLNLTARQVEVWFQNRRARTKLKQ). The leucine-zipper stretch occupies residues 194-215 (LKRCVEKLTEENRRLQKEAMEL).

It belongs to the HD-ZIP homeobox family. Class II subfamily. As to quaternary structure, interacts with RBR1.

The protein resides in the nucleus. Probable transcription factor that plays a role in auxin-mediated morphogenesis. Negatively regulates lateral root elongation. This Arabidopsis thaliana (Mouse-ear cress) protein is Homeobox-leucine zipper protein HAT2 (HAT2).